Consider the following 91-residue polypeptide: Virion membrane protein A14 homolog (91 aa).

Over 1–12 (MDPLGFFRNRPS) the chain is Intravirion. A helical membrane pass occupies residues 13 to 33 (YVVVFGIILLIVACICAYIEL). Residues 34–46 (SKSGKPADSALRS) are Virion surface-facing. Residues 47-67 (ISIISFILAILLLLGIILFSG) traverse the membrane as a helical segment. The Intravirion segment spans residues 68 to 91 (YNRYCTGNVVDESRYATSPGTEIQ).

Belongs to the chordopoxvirinae A14 family. Homodimer; disulfide-linked. Interacts with A17. Post-translationally, phosphorylated by viral F10 kinase, phosphorylation state is regulated by H1 phosphatase.

It is found in the virion membrane. Its function is as follows. Envelope protein which is a major component of the mature virion (MV) membrane. Essential for membrane biogenesis. Is required, together with A17, to form bona fide crescents, which can progress to form the immature virion (IV) membrane. A14 and A17 form a lattice that is stabilized by disulfide bonds and serves as an anchor within the viral membrane to which several other proteins important in virion structure and morphogenesis attach. The polypeptide is Virion membrane protein A14 homolog (Fowlpox virus (strain NVSL) (FPV)).